The primary structure comprises 209 residues: MGQKVHPRGFRLGLSADWQAKWFNEKNYKEWLLEDEEIRKFIKNRYYHAGISEIYVERPDAERINITVKTARPGIIIGRKGAEITSLREELERKFNRRVVINIEEIKTPELDAQLVAESIASRIEKRASYKVAMKRAIMNAMRKGAQGIKVMVAGRLGGAEIARREWYLRGRLPLQKLKAIIDYGTATAWTKYGTIGIKVWIYKGDADI.

Residues 38–107 (IRKFIKNRYY…RVVINIEEIK (70 aa)) enclose the KH type-2 domain.

The protein belongs to the universal ribosomal protein uS3 family. In terms of assembly, part of the 30S ribosomal subunit. Forms a tight complex with proteins S10 and S14.

Functionally, binds the lower part of the 30S subunit head. Binds mRNA in the 70S ribosome, positioning it for translation. This Thermotoga petrophila (strain ATCC BAA-488 / DSM 13995 / JCM 10881 / RKU-1) protein is Small ribosomal subunit protein uS3.